The following is a 282-amino-acid chain: Acetyl-coenzyme A carboxylase carboxyl transferase subunit beta (282 aa).

The 258-residue stretch at 25–282 (VWRKCPHCNE…SQMLRIFMKQ (258 aa)) folds into the CoA carboxyltransferase N-terminal domain. C29, C32, C48, and C51 together coordinate Zn(2+). Residues 29–51 (CPHCNEIIYAKEIERNLNVCPKC) form a C4-type zinc finger.

It belongs to the AccD/PCCB family. As to quaternary structure, acetyl-CoA carboxylase is a heterohexamer composed of biotin carboxyl carrier protein (AccB), biotin carboxylase (AccC) and two subunits each of ACCase subunit alpha (AccA) and ACCase subunit beta (AccD). It depends on Zn(2+) as a cofactor.

It localises to the cytoplasm. It catalyses the reaction N(6)-carboxybiotinyl-L-lysyl-[protein] + acetyl-CoA = N(6)-biotinyl-L-lysyl-[protein] + malonyl-CoA. It functions in the pathway lipid metabolism; malonyl-CoA biosynthesis; malonyl-CoA from acetyl-CoA: step 1/1. Functionally, component of the acetyl coenzyme A carboxylase (ACC) complex. Biotin carboxylase (BC) catalyzes the carboxylation of biotin on its carrier protein (BCCP) and then the CO(2) group is transferred by the transcarboxylase to acetyl-CoA to form malonyl-CoA. This is Acetyl-coenzyme A carboxylase carboxyl transferase subunit beta from Syntrophotalea carbinolica (strain DSM 2380 / NBRC 103641 / GraBd1) (Pelobacter carbinolicus).